The primary structure comprises 161 residues: 2-C-methyl-D-erythritol 2,4-cyclodiphosphate synthase (161 aa).

A divalent metal cation is bound by residues D10 and H12. 4-CDP-2-C-methyl-D-erythritol 2-phosphate contacts are provided by residues 10–12 (DVH) and 36–37 (HS). H44 lines the a divalent metal cation pocket. 4-CDP-2-C-methyl-D-erythritol 2-phosphate contacts are provided by residues 58-60 (DIG), 134-137 (TTTE), F141, and R144.

Belongs to the IspF family. Homotrimer. Requires a divalent metal cation as cofactor.

The catalysed reaction is 4-CDP-2-C-methyl-D-erythritol 2-phosphate = 2-C-methyl-D-erythritol 2,4-cyclic diphosphate + CMP. The protein operates within isoprenoid biosynthesis; isopentenyl diphosphate biosynthesis via DXP pathway; isopentenyl diphosphate from 1-deoxy-D-xylulose 5-phosphate: step 4/6. Its function is as follows. Involved in the biosynthesis of isopentenyl diphosphate (IPP) and dimethylallyl diphosphate (DMAPP), two major building blocks of isoprenoid compounds. Catalyzes the conversion of 4-diphosphocytidyl-2-C-methyl-D-erythritol 2-phosphate (CDP-ME2P) to 2-C-methyl-D-erythritol 2,4-cyclodiphosphate (ME-CPP) with a corresponding release of cytidine 5-monophosphate (CMP). The sequence is that of 2-C-methyl-D-erythritol 2,4-cyclodiphosphate synthase from Parabacteroides distasonis (strain ATCC 8503 / DSM 20701 / CIP 104284 / JCM 5825 / NCTC 11152).